Here is a 239-residue protein sequence, read N- to C-terminus: LexA repressor (239 aa).

Residues 27–47 constitute a DNA-binding region (H-T-H motif); the sequence is FDEMKDALDLASKSGIHRLIT. Catalysis depends on for autocatalytic cleavage activity residues Ser159 and Lys197.

The protein belongs to the peptidase S24 family. As to quaternary structure, homodimer.

The catalysed reaction is Hydrolysis of Ala-|-Gly bond in repressor LexA.. Its function is as follows. Represses a number of genes involved in the response to DNA damage (SOS response), including recA and lexA. In the presence of single-stranded DNA, RecA interacts with LexA causing an autocatalytic cleavage which disrupts the DNA-binding part of LexA, leading to derepression of the SOS regulon and eventually DNA repair. This chain is LexA repressor, found in Rhizobium radiobacter (Agrobacterium tumefaciens).